Reading from the N-terminus, the 449-residue chain is Ribosomal protein uS12 methylthiotransferase RimO (449 aa).

One can recognise an MTTase N-terminal domain in the interval 5–116 (PTIAISHLGC…IVDVVQRVEN (112 aa)). Residues cysteine 14, cysteine 50, cysteine 79, cysteine 154, cysteine 158, and cysteine 161 each coordinate [4Fe-4S] cluster. A Radical SAM core domain is found at 140-369 (TTTEGVAYLR…MEVQQPISIK (230 aa)). The TRAM domain occupies 372-438 (QNCIGQTVPV…VYDLYGKTNL (67 aa)).

It belongs to the methylthiotransferase family. RimO subfamily. The cofactor is [4Fe-4S] cluster.

It localises to the cytoplasm. The enzyme catalyses L-aspartate(89)-[ribosomal protein uS12]-hydrogen + (sulfur carrier)-SH + AH2 + 2 S-adenosyl-L-methionine = 3-methylsulfanyl-L-aspartate(89)-[ribosomal protein uS12]-hydrogen + (sulfur carrier)-H + 5'-deoxyadenosine + L-methionine + A + S-adenosyl-L-homocysteine + 2 H(+). Catalyzes the methylthiolation of an aspartic acid residue of ribosomal protein uS12. The sequence is that of Ribosomal protein uS12 methylthiotransferase RimO from Rippkaea orientalis (strain PCC 8801 / RF-1) (Cyanothece sp. (strain PCC 8801)).